The chain runs to 65 residues: Sarcoplasmic/endoplasmic reticulum calcium ATPase regulator ARLN (65 aa).

Methionine 1 carries the post-translational modification N-acetylmethionine. Residues 1–38 are disordered; it reads MEVGQAASGTDGVRERRGSSAARRRSQDEPVQSGMNGI. 2 positions are modified to phosphoserine: serine 19 and serine 26. The chain crosses the membrane as a helical span at residues 44 to 64; that stretch reads WLDLWLFILFDLALFIFVYLL.

In terms of assembly, homooligomer. Can also form heterooligomers with other sarcoplasmic/endoplasmic reticulum calcium ATPase (SERCA) regulators ERLN, PLN, SLN and STRIT1/DWORF. Monomer. Interacts as a monomer with ATP2A2/SERCA2; the interaction results in inhibition of ATP2A2 Ca(2+) affinity.

It is found in the endoplasmic reticulum membrane. Its function is as follows. Inhibits the activity of the calcium ATPases ATP2A2/SERCA2 and ATP2A3/SERCA3 by decreasing their apparent affinity for Ca(2+). The sequence is that of Sarcoplasmic/endoplasmic reticulum calcium ATPase regulator ARLN (Arln) from Rattus norvegicus (Rat).